Reading from the N-terminus, the 192-residue chain is 3-hydroxyanthranilate 3,4-dioxygenase 1 (192 aa).

Arg-50 lines the O2 pocket. The Fe cation site is built by His-54, Glu-60, and His-102. A substrate-binding site is contributed by Glu-60. Residues Arg-106 and Glu-116 each contribute to the substrate site. A divalent metal cation is bound by residues Cys-131, Cys-134, Cys-168, and Cys-171.

The protein belongs to the 3-HAO family. The cofactor is Fe(2+).

It is found in the cytoplasm. It carries out the reaction 3-hydroxyanthranilate + O2 = (2Z,4Z)-2-amino-3-carboxymuconate 6-semialdehyde. It functions in the pathway cofactor biosynthesis; NAD(+) biosynthesis; quinolinate from L-kynurenine: step 3/3. In terms of biological role, catalyzes the oxidative ring opening of 3-hydroxyanthranilate to 2-amino-3-carboxymuconate semialdehyde, which spontaneously cyclizes to quinolinate. The polypeptide is 3-hydroxyanthranilate 3,4-dioxygenase 1 (bna1-1) (Aspergillus fumigatus (strain CBS 144.89 / FGSC A1163 / CEA10) (Neosartorya fumigata)).